The sequence spans 300 residues: Jacalin-related lectin 33 (300 aa).

Residues 1 to 20 form a disordered region; that stretch reads MAQKVEAGGGAGGASWDDGV. Alanine 2 is modified (N-acetylalanine). Jacalin-type lectin domains are found at residues 2 to 146 and 154 to 297; these read AQKV…YFAT and AKKL…HVMP.

This sequence belongs to the jacalin lectin family. In terms of assembly, component of the PYK10 complex, at least composed of PYK10/BGLU23, BGLU21, BGLU22, JAL22, JAL23, PBP1/JAL30, PBP2/JAL31, JAL32, JAL33, JAL34, JAL35, GLL22 and GLL23.

Sugar-binding protein showing significant affinity for (Glc alpha(1-4)Glc)(3) maltohexaose, (Glc alpha(1-6)Glc)(3) isomaltohexaose, Gal alpha(1-4)Gal beta(1-4)Glc, GalNAc alpha(1-3)(Fuc alpha(1-2)) and Gal beta(1-3)(Fuc alpha(1-4))GlcNAc beta(1-3)Gal beta(1-4)Glc. The sequence is that of Jacalin-related lectin 33 (JAL33) from Arabidopsis thaliana (Mouse-ear cress).